Here is a 776-residue protein sequence, read N- to C-terminus: 5-methyltetrahydropteroyltriglutamate--homocysteine methyltransferase (776 aa).

5-methyltetrahydropteroyltri-L-glutamate is bound by residues 13–16 and lysine 127; that span reads RELK. L-homocysteine-binding positions include 450–452 and glutamate 503; that span reads IGS. L-methionine contacts are provided by residues 450-452 and glutamate 503; that span reads IGS. Tryptophan 580 is a binding site for 5-methyltetrahydropteroyltri-L-glutamate. Aspartate 618 serves as a coordination point for L-homocysteine. L-methionine is bound at residue aspartate 618. Glutamate 624 serves as a coordination point for 5-methyltetrahydropteroyltri-L-glutamate. Histidine 660, cysteine 662, and glutamate 684 together coordinate Zn(2+). The Proton donor role is filled by histidine 713. Zn(2+) is bound at residue cysteine 745.

It belongs to the vitamin-B12 independent methionine synthase family. The cofactor is Zn(2+).

It catalyses the reaction 5-methyltetrahydropteroyltri-L-glutamate + L-homocysteine = tetrahydropteroyltri-L-glutamate + L-methionine. Its pathway is amino-acid biosynthesis; L-methionine biosynthesis via de novo pathway; L-methionine from L-homocysteine (MetE route): step 1/1. Functionally, catalyzes the transfer of a methyl group from 5-methyltetrahydrofolate to homocysteine resulting in methionine formation. The protein is 5-methyltetrahydropteroyltriglutamate--homocysteine methyltransferase of Mesorhizobium japonicum (strain LMG 29417 / CECT 9101 / MAFF 303099) (Mesorhizobium loti (strain MAFF 303099)).